Consider the following 66-residue polypeptide: Large ribosomal subunit protein uL29 (66 aa).

Belongs to the universal ribosomal protein uL29 family.

This chain is Large ribosomal subunit protein uL29, found in Bacillus licheniformis (strain ATCC 14580 / DSM 13 / JCM 2505 / CCUG 7422 / NBRC 12200 / NCIMB 9375 / NCTC 10341 / NRRL NRS-1264 / Gibson 46).